The sequence spans 108 residues: Nucleoid-associated protein PSHAa1202 (108 aa).

Disordered regions lie at residues 1–20 (MFKGGMGNMMKQAQQMQDRM) and 87–108 (TQERMGKVTGGMQLPPGMKMPF).

This sequence belongs to the YbaB/EbfC family. In terms of assembly, homodimer.

It localises to the cytoplasm. Its subcellular location is the nucleoid. Binds to DNA and alters its conformation. May be involved in regulation of gene expression, nucleoid organization and DNA protection. The sequence is that of Nucleoid-associated protein PSHAa1202 from Pseudoalteromonas translucida (strain TAC 125).